We begin with the raw amino-acid sequence, 736 residues long: Catalase-peroxidase (736 aa).

The segment at residues 96–224 (WHSAGTYRTG…LAAVQMGLIY (129 aa)) is a cross-link (tryptophyl-tyrosyl-methioninium (Trp-Tyr) (with M-250)). The active-site Proton acceptor is H97. The tryptophyl-tyrosyl-methioninium (Tyr-Met) (with W-96) cross-link spans 224–250 (YVNPEGPDGNPDPVASGRDVRETFGRM). H265 serves as a coordination point for heme b.

It belongs to the peroxidase family. Peroxidase/catalase subfamily. In terms of assembly, homodimer or homotetramer. Heme b serves as cofactor. Formation of the three residue Trp-Tyr-Met cross-link is important for the catalase, but not the peroxidase activity of the enzyme.

The enzyme catalyses H2O2 + AH2 = A + 2 H2O. It catalyses the reaction 2 H2O2 = O2 + 2 H2O. Functionally, bifunctional enzyme with both catalase and broad-spectrum peroxidase activity. The polypeptide is Catalase-peroxidase (Pelobacter propionicus (strain DSM 2379 / NBRC 103807 / OttBd1)).